Reading from the N-terminus, the 444-residue chain is Pre-mRNA-splicing factor cwc25 (444 aa).

Disordered regions lie at residues 1–27 (MGSG…QKAE), 168–385 (LASM…TDLD), and 397–425 (EAER…GFMS). Residues 19 to 65 (NVAATQKAEAEAIAERKKLQQRLQEIEEERRKEEIQKALEAAGGKRK) are a coiled coil. Over residues 186 to 199 (QRRHKHRSHHHRSD) the composition is skewed to basic residues. Composition is skewed to basic and acidic residues over residues 200-220 (RHRD…DRDR) and 228-281 (DSRD…DDRS). Basic residues predominate over residues 282–293 (RRHRFPQGRSRS). Basic and acidic residues-rich tracts occupy residues 305-344 (RREY…EQPK), 360-372 (DGDH…ERAK), and 397-410 (EAER…EKAR). A coiled-coil region spans residues 364 to 417 (KNAEEERAKKLAAMQAAATDLDKAREERLKALAEAERAEREADEKARQQNKKFR).

The protein belongs to the CWC25 family. Associated with the spliceosome.

It is found in the nucleus. Its function is as follows. Involved in pre-mRNA splicing. This Neurospora crassa (strain ATCC 24698 / 74-OR23-1A / CBS 708.71 / DSM 1257 / FGSC 987) protein is Pre-mRNA-splicing factor cwc25 (msp-6).